A 271-amino-acid chain; its full sequence is Pyrroline-5-carboxylate reductase (271 aa).

The protein belongs to the pyrroline-5-carboxylate reductase family.

The protein resides in the cytoplasm. The catalysed reaction is L-proline + NADP(+) = (S)-1-pyrroline-5-carboxylate + NADPH + 2 H(+). It carries out the reaction L-proline + NAD(+) = (S)-1-pyrroline-5-carboxylate + NADH + 2 H(+). It participates in amino-acid biosynthesis; L-proline biosynthesis; L-proline from L-glutamate 5-semialdehyde: step 1/1. In terms of biological role, catalyzes the reduction of 1-pyrroline-5-carboxylate (PCA) to L-proline. This is Pyrroline-5-carboxylate reductase from Staphylococcus epidermidis (strain ATCC 35984 / DSM 28319 / BCRC 17069 / CCUG 31568 / BM 3577 / RP62A).